The following is a 732-amino-acid chain: Polyribonucleotide nucleotidyltransferase (732 aa).

2 residues coordinate Mg(2+): aspartate 483 and aspartate 489. In terms of domain architecture, KH spans proline 550–valine 609. The S1 motif domain occupies glycine 619–lysine 687. The disordered stretch occupies residues leucine 684–arginine 732. Over residues glutamine 702–glycine 720 the composition is skewed to basic and acidic residues.

It belongs to the polyribonucleotide nucleotidyltransferase family. Mg(2+) serves as cofactor.

It is found in the cytoplasm. It carries out the reaction RNA(n+1) + phosphate = RNA(n) + a ribonucleoside 5'-diphosphate. Its function is as follows. Involved in mRNA degradation. Catalyzes the phosphorolysis of single-stranded polyribonucleotides processively in the 3'- to 5'-direction. This Gemmatimonas aurantiaca (strain DSM 14586 / JCM 11422 / NBRC 100505 / T-27) protein is Polyribonucleotide nucleotidyltransferase.